We begin with the raw amino-acid sequence, 195 residues long: Heterogeneous nuclear ribonucleoprotein A/B (195 aa).

The segment at 1–23 (EEVADGQAHGEXVYREEHHEGEK) is disordered. Over residues 12–23 (XVYREEHHEGEK) the composition is skewed to basic and acidic residues. One can recognise an RRM domain in the interval 32–48 (EETKLFVGALSWETTEK). R119 and R122 each carry asymmetric dimethylarginine. S173 is modified (phosphoserine; by CK2).

Extensively phosphorylated on tyrosine residues.

The protein localises to the cytoplasm. Its subcellular location is the nucleus. Functionally, may regulate mRNA translation and stability. It binds to poly(A) and poly(U) regions of RNA. This binding is inhibited when the protein is phosphorylated. The chain is Heterogeneous nuclear ribonucleoprotein A/B from Artemia salina (Brine shrimp).